A 498-amino-acid chain; its full sequence is NAD(P)H-quinone oxidoreductase subunit 2, chloroplastic (498 aa).

A run of 14 helical transmembrane segments spans residues 18-38 (LTILPEIILILGLVAVVVIDL), 51-71 (ISMVTLLASAVILLWQWGFFT), 87-107 (FFLLICSLLSISSSVDYILCS), 111-131 (LAEFLLFKLAAGLGGMVLSCA), 134-154 (LVTIYVSLEFLALSSCFLSGY), 168-188 (FLLMSGASSSLLLYGFSLLYG), 211-231 (IIYLSAAFTTAGTAFKLSLFP), 244-264 (PTPVVAFFSVTSKVAALALFT), 278-298 (WHVAVGLLATFSMILGNLIAV), 306-326 (MLAFSSISQIGYIMIGVLSAD), 337-357 (YTFIYILMNLGTFACITLFGL), 379-399 (FSLVLCLLSLGGMPPLSGFFG), 411-431 (GLYSLVLVALVTSVISIYYYL), and 470-490 (IAMIICALASTLSGIFIDPII).

This sequence belongs to the complex I subunit 2 family. NDH is composed of at least 16 different subunits, 5 of which are encoded in the nucleus.

The protein localises to the plastid. It localises to the chloroplast thylakoid membrane. It carries out the reaction a plastoquinone + NADH + (n+1) H(+)(in) = a plastoquinol + NAD(+) + n H(+)(out). It catalyses the reaction a plastoquinone + NADPH + (n+1) H(+)(in) = a plastoquinol + NADP(+) + n H(+)(out). In terms of biological role, NDH shuttles electrons from NAD(P)H:plastoquinone, via FMN and iron-sulfur (Fe-S) centers, to quinones in the photosynthetic chain and possibly in a chloroplast respiratory chain. The immediate electron acceptor for the enzyme in this species is believed to be plastoquinone. Couples the redox reaction to proton translocation, and thus conserves the redox energy in a proton gradient. The chain is NAD(P)H-quinone oxidoreductase subunit 2, chloroplastic from Adiantum capillus-veneris (Maidenhair fern).